The primary structure comprises 661 residues: Pentatricopeptide repeat-containing protein At3g04750, mitochondrial (661 aa).

A mitochondrion-targeting transit peptide spans 1 to 18; that stretch reads MCFVLLLRRGFRLFGTEC. PPR repeat units follow at residues 99–131, 132–163, 165–195, 196–230, 231–265, 268–298, 299–333, 334–366, 367–401, 402–432, 433–467, 468–498, and 504–539; these read NVFV…RVSP, DRQT…GCLS, GNYL…MPHP, DVSS…GIEP, DEYT…GPVY, NLIL…MKKK, DMRS…DLVS, WNSL…KVKP, DRVT…QLKG, DAFL…ATEK, DVAL…GVTP, NNVT…MKDK, and ETEH…PSQS. Residues 540–615 are type E motif; sequence MWGSILSACR…TAGYSSVVGV (76 aa). Residues 616–647 are type E(+) motif; that stretch reads EGLHRFVAAEKQNHPRWTEIKRILQHLYNEMK.

This sequence belongs to the PPR family. PCMP-E subfamily.

It is found in the mitochondrion. In Arabidopsis thaliana (Mouse-ear cress), this protein is Pentatricopeptide repeat-containing protein At3g04750, mitochondrial (PCMP-E81).